The following is a 324-amino-acid chain: Biotin synthase 1 (324 aa).

Positions 37 to 256 (NAIETASLLS…VALARILMPA (220 aa)) constitute a Radical SAM core domain. [4Fe-4S] cluster is bound by residues C52, C56, and C59. The [2Fe-2S] cluster site is built by C96, C127, C187, and R260.

This sequence belongs to the radical SAM superfamily. Biotin synthase family. In terms of assembly, homodimer. [4Fe-4S] cluster serves as cofactor. [2Fe-2S] cluster is required as a cofactor.

The catalysed reaction is (4R,5S)-dethiobiotin + (sulfur carrier)-SH + 2 reduced [2Fe-2S]-[ferredoxin] + 2 S-adenosyl-L-methionine = (sulfur carrier)-H + biotin + 2 5'-deoxyadenosine + 2 L-methionine + 2 oxidized [2Fe-2S]-[ferredoxin]. The protein operates within cofactor biosynthesis; biotin biosynthesis; biotin from 7,8-diaminononanoate: step 2/2. Catalyzes the conversion of dethiobiotin (DTB) to biotin by the insertion of a sulfur atom into dethiobiotin via a radical-based mechanism. The sequence is that of Biotin synthase 1 from Paracoccus denitrificans (strain Pd 1222).